Here is a 331-residue protein sequence, read N- to C-terminus: uncharacterized protein (331 aa).

It belongs to the ornithine cyclodeaminase/mu-crystallin family.

This is an uncharacterized protein from Sinorhizobium fredii (strain NBRC 101917 / NGR234).